A 593-amino-acid polypeptide reads, in one-letter code: Aspartate--tRNA ligase (593 aa).

Glu-180 is a binding site for L-aspartate. The aspartate stretch occupies residues 204–207 (QIFK). L-aspartate is bound at residue Arg-226. ATP contacts are provided by residues 226–228 (RDE) and Gln-235. His-453 provides a ligand contact to L-aspartate. Glu-487 contacts ATP. Arg-494 contacts L-aspartate. 539–542 (GLDR) is a binding site for ATP.

It belongs to the class-II aminoacyl-tRNA synthetase family. Type 1 subfamily. In terms of assembly, homodimer.

Its subcellular location is the cytoplasm. The enzyme catalyses tRNA(Asp) + L-aspartate + ATP = L-aspartyl-tRNA(Asp) + AMP + diphosphate. Catalyzes the attachment of L-aspartate to tRNA(Asp) in a two-step reaction: L-aspartate is first activated by ATP to form Asp-AMP and then transferred to the acceptor end of tRNA(Asp). This is Aspartate--tRNA ligase from Clostridium botulinum (strain Kyoto / Type A2).